A 213-amino-acid polypeptide reads, in one-letter code: Dimethylamine corrinoid protein 3 (213 aa).

Residues 1–91 enclose the B12-binding N-terminal domain; the sequence is MADIEGLLHE…DLPAGAEKKL (91 aa). Residues 92-213 form the B12-binding domain; the sequence is GVIVNGTVEG…AVAKAKELLL (122 aa). Histidine 104 provides a ligand contact to methylcob(III)alamin.

Belongs to the methylamine corrinoid protein family.

It participates in one-carbon metabolism; methanogenesis from dimethylamine. In terms of biological role, acts as a methyl group carrier between MtbB and MtbA. The chain is Dimethylamine corrinoid protein 3 (mtbC3) from Methanosarcina acetivorans (strain ATCC 35395 / DSM 2834 / JCM 12185 / C2A).